A 221-amino-acid chain; its full sequence is uncharacterized protein (221 aa).

The next 6 membrane-spanning stretches (helical) occupy residues 33–55 (YFLLPILLTYKMLGLSVFWISYI), 70–92 (FGYRLIPGVIFMFLSGAYLQKIV), 99–121 (LEMLSLIIIYIISLFWLVFFIII), 125–147 (YGAYTRETLLGLLVGIPLVYTLL), 154–176 (YFNDLFGKLSYGIFLSHFLSFWI), and 186–208 (IISMIFLSLIISASVSYLIITLI).

The protein localises to the cell membrane. This is an uncharacterized protein from Aquifex aeolicus (strain VF5).